We begin with the raw amino-acid sequence, 440 residues long: uncharacterized protein (440 aa).

Disordered stretches follow at residues 49 to 81 (CPPAQSHGHSSLRTNLNSSPPRCPQNPGTEPSL) and 162 to 295 (LPKP…CASE). Residues 55-80 (HGHSSLRTNLNSSPPRCPQNPGTEPS) are compositionally biased toward polar residues. Over residues 249 to 266 (YREELSNTKSRFSEDKGS) the composition is skewed to basic and acidic residues. Over residues 274 to 284 (SSNSSEPGLPG) the composition is skewed to low complexity.

Belongs to the tymoviridae protein p69 family.

This is an uncharacterized protein from Erysimum latent virus (ELV).